We begin with the raw amino-acid sequence, 187 residues long: Adenylate kinase (187 aa).

ATP is bound at residue 10–15 (GSGKGT). The segment at 30–59 (STGDLLRSEVVAGTPLGLQAKQVMAQGDLV) is NMP. Residues Thr31, Arg36, 57–59 (DLV), 85–88 (GYPR), and Gln92 contribute to the AMP site. An LID region spans residues 126-136 (GRAQAEGREDD). ATP is bound at residue Arg127. Residues Arg133 and Arg144 each coordinate AMP. Gly172 lines the ATP pocket.

This sequence belongs to the adenylate kinase family. In terms of assembly, monomer.

It is found in the cytoplasm. The catalysed reaction is AMP + ATP = 2 ADP. The protein operates within purine metabolism; AMP biosynthesis via salvage pathway; AMP from ADP: step 1/1. Catalyzes the reversible transfer of the terminal phosphate group between ATP and AMP. Plays an important role in cellular energy homeostasis and in adenine nucleotide metabolism. The chain is Adenylate kinase from Xylella fastidiosa (strain 9a5c).